The chain runs to 275 residues: Dihydropteroate synthase (275 aa).

Positions 15–267 (PQIMGILNFT…DVAATSDMLK (253 aa)) constitute a Pterin-binding domain. Position 22 (asparagine 22) interacts with Mg(2+). (7,8-dihydropterin-6-yl)methyl diphosphate is bound by residues threonine 62, aspartate 96, asparagine 115, aspartate 185, lysine 221, and 255–257 (RVH).

It belongs to the DHPS family. As to quaternary structure, homodimer. Requires Mg(2+) as cofactor.

It catalyses the reaction (7,8-dihydropterin-6-yl)methyl diphosphate + 4-aminobenzoate = 7,8-dihydropteroate + diphosphate. The protein operates within cofactor biosynthesis; tetrahydrofolate biosynthesis; 7,8-dihydrofolate from 2-amino-4-hydroxy-6-hydroxymethyl-7,8-dihydropteridine diphosphate and 4-aminobenzoate: step 1/2. Catalyzes the condensation of para-aminobenzoate (pABA) with 6-hydroxymethyl-7,8-dihydropterin diphosphate (DHPt-PP) to form 7,8-dihydropteroate (H2Pte), the immediate precursor of folate derivatives. The protein is Dihydropteroate synthase (folP-A) of Haemophilus influenzae (strain ATCC 51907 / DSM 11121 / KW20 / Rd).